Here is a 295-residue protein sequence, read N- to C-terminus: Acetylglutamate kinase (295 aa).

Residues 66–67 (GG), arginine 88, and asparagine 193 contribute to the substrate site.

This sequence belongs to the acetylglutamate kinase family. ArgB subfamily.

It localises to the cytoplasm. It catalyses the reaction N-acetyl-L-glutamate + ATP = N-acetyl-L-glutamyl 5-phosphate + ADP. The protein operates within amino-acid biosynthesis; L-arginine biosynthesis; N(2)-acetyl-L-ornithine from L-glutamate: step 2/4. Functionally, catalyzes the ATP-dependent phosphorylation of N-acetyl-L-glutamate. This chain is Acetylglutamate kinase, found in Rhizobium rhizogenes (strain K84 / ATCC BAA-868) (Agrobacterium radiobacter).